A 364-amino-acid chain; its full sequence is 3-isopropylmalate dehydrogenase (364 aa).

79–92 (GSKWDHLPEIEKPE) contributes to the NAD(+) binding site. R100, R110, R139, and D227 together coordinate substrate. D227, D251, and D255 together coordinate Mg(2+). 285–297 (GSAPNIAGKTIAN) contacts NAD(+).

Belongs to the isocitrate and isopropylmalate dehydrogenases family. LeuB type 1 subfamily. Homodimer. It depends on Mg(2+) as a cofactor. The cofactor is Mn(2+).

It is found in the cytoplasm. It carries out the reaction (2R,3S)-3-isopropylmalate + NAD(+) = 4-methyl-2-oxopentanoate + CO2 + NADH. The protein operates within amino-acid biosynthesis; L-leucine biosynthesis; L-leucine from 3-methyl-2-oxobutanoate: step 3/4. In terms of biological role, catalyzes the oxidation of 3-carboxy-2-hydroxy-4-methylpentanoate (3-isopropylmalate) to 3-carboxy-4-methyl-2-oxopentanoate. The product decarboxylates to 4-methyl-2 oxopentanoate. The sequence is that of 3-isopropylmalate dehydrogenase from Buchnera aphidicola subsp. Thelaxes suberi.